We begin with the raw amino-acid sequence, 514 residues long: Cilia- and flagella-associated protein 53 (514 aa).

2 coiled-coil regions span residues 91–148 (IINI…RQDF) and 203–474 (KLWE…REFE).

Belongs to the CFAP53 family. As to quaternary structure, microtubule inner protein component of sperm flagellar doublet microtubules. Interacts with PIERCE1 and PIERCE2; the interactions link outer dynein arms docking complex (ODA-DC) to the internal microtubule inner proteins (MIP) in cilium axoneme. Interacts with CCDC38. Interacts with CCDC42 and IFT88. Interacts with centriolar satellite proteins PIBF1/CEP90 and PCM1. Interacts with dyneins DNAIC1, DNAIC2 AND DNAH11 and with ODA-DC component ODAD4/TTC25. Expressed in skin fibroblasts (at protein level). Expressed in nasal respiratory epithelial cells (at protein level). Expressed in airway epithelial cells.

It localises to the cytoplasm. Its subcellular location is the cytoskeleton. The protein localises to the cilium axoneme. The protein resides in the flagellum axoneme. It is found in the microtubule organizing center. It localises to the centrosome. Its subcellular location is the centriole. The protein localises to the centriolar satellite. The protein resides in the spindle pole. It is found in the cell projection. It localises to the cilium. In terms of biological role, microtubule inner protein (MIP) part of the dynein-decorated doublet microtubules (DMTs) in cilia axoneme, which is required for motile cilia beating. Regulates motility patterns of both 9+0 and 9+2 motile cilia through differential localization and recruitment of axonemal dynein components. Required for centriolar satellite integrity and non-motile cilium assembly. Required for motile cilium formation. Through its role in the beating of primary cilia, involved in the establishment of organ laterality during embryogenesis. Required for sperm flagellum biogenesis and is essential for male fertility. This chain is Cilia- and flagella-associated protein 53, found in Homo sapiens (Human).